Consider the following 1404-residue polypeptide: MKALLDLFKQVTQKEEFDSIKIGLASPEKIRSWSYGEVKKPETINYRTFKPERDGLFCAKIFGPVKDYECLCGKYKRLKHRGVICEKCGVEVTLSRIRRERMGHIELASPVAHIWFLKSLPSRLGLVLDMTLRDIERVLYFEAYVVTDPGMTPLNRGQLLTEDDYLNKTEEFGDDFSAVMGAEGIRTLLSNMDIPLEIESLRLEIQTTGSETKIKKAAKRLKVLEAFNKSGMKPEWMILTVLPVLPPELRPLVPLDGGRFATSDLNDLYRRVINRNNRLKRLLELRAPEIIIRNEKRMLQESVDSLLDNGRRGKAMTGANKRPLKSLADMIKGKGGRFRQNLLGKRVDYSGRSVIVVGPQLKLHQCGLPKKMALELFKPFIFNKLETMGVASTIKAAKREVENESPIVWDILEEVIREHPVMLNRAPTLHRLGIQAFEPILVEGKAIQLHPLVCAAFNADFDGDQMAVHVPLSLEAQMECRTLMLSTNNVLSPANGDPIIVPSQDIVLGLYYMTRKKIGAQGEGMVFSDISEVVRAYENKVVELNAGIIVRIKERKKSRSHGEEPVEAITRYETTVGRALISEILPAGLPFSIINKVLKKKEISKLINASFRLCGLRETVIFADKLMYSGFSYATRGGISICLDDLVTPSQKNDIIHAAEQEVHEIANQYISGLVTQGERYNKVVDIWGRAGDQVAKAMMDQLSVEPVTDRETGQVRADKNGQVVTQESFNSIYMMADSGARGSAAQIRQLSGMRGLMAKPDGSIIETPITANFREGLNILQYFISTHGARKGLADTALKTANSGYLTRRLVDVTQDLVITEDDCDTDGGVIMKALVEGGDVIESLRERILGRVAATDIVNPETGAVIYAAGMLLDEDAVDEIETCGIDEVKVRTPLTCETRYGLCAKCYGRDLGRGMLVNVGEAVGVIAAQSIGEPGTQLTMRTFHIGGAASRTVVANQVESKSNGVIRYSHHIRYVKNAQNELIVISRSGEVYIQDENGRERERHKIPYGATLLVQDGEVIKAGQILASWEPHKRPIIAEYAGKVRFENVEEGVTVVRQIDEITGLATLVVIDPKRRNVAQSKGLRPLVKFLDENDNEINIPGSDQPVSITFHVGSIITVRDGQQVNIGEVLARIPQETSKTRDITGGLPRVAELFEARVPKDVGFLAEATGTVAFGKDTKGKQRLVITDLDGVAHEYLIPKDKHVTAHDGQVVNKGEVIVDGPIDPHDILRLQGVEALARYISNEVQDVYRLQGVRINDKHIEVIVRQMLRRVQIMNAGDSSFIPGEQVERAEVLTENEKLIAENKMPATYEYVLLGITKASLSTDSFISAASFQETTRVLTEASIMGKKDDLRGLKENVIVGRLIPAGTGLSFHNIRKKQRLSESAAYLDTDLTENEVTE.

Positions 70, 72, 85, and 88 each coordinate Zn(2+). Mg(2+) is bound by residues D460, D462, and D464. Positions 825, 899, 906, and 909 each coordinate Zn(2+).

The protein belongs to the RNA polymerase beta' chain family. The RNAP catalytic core consists of 2 alpha, 1 beta, 1 beta' and 1 omega subunit. When a sigma factor is associated with the core the holoenzyme is formed, which can initiate transcription. Mg(2+) serves as cofactor. Zn(2+) is required as a cofactor.

It carries out the reaction RNA(n) + a ribonucleoside 5'-triphosphate = RNA(n+1) + diphosphate. In terms of biological role, DNA-dependent RNA polymerase catalyzes the transcription of DNA into RNA using the four ribonucleoside triphosphates as substrates. This Nitrosomonas europaea (strain ATCC 19718 / CIP 103999 / KCTC 2705 / NBRC 14298) protein is DNA-directed RNA polymerase subunit beta'.